A 36-amino-acid chain; its full sequence is Photosystem I reaction center subunit VIII (36 aa).

A helical transmembrane segment spans residues P7 to Y29.

It belongs to the PsaI family.

Its subcellular location is the plastid. The protein localises to the chloroplast thylakoid membrane. Functionally, may help in the organization of the PsaL subunit. In Gracilaria tenuistipitata var. liui (Red alga), this protein is Photosystem I reaction center subunit VIII.